A 103-amino-acid chain; its full sequence is Defensin-like protein 290 (103 aa).

The first 29 residues, 1-29 (MTALRRTISIIFVFYLSCTLFVNIFGVQA), serve as a signal peptide directing secretion. Disulfide bonds link Cys-33–Cys-50, Cys-39–Cys-55, Cys-43–Cys-57, Cys-72–Cys-92, Cys-78–Cys-98, and Cys-84–Cys-100.

Belongs to the DEFL family.

The protein resides in the secreted. The sequence is that of Defensin-like protein 290 from Arabidopsis thaliana (Mouse-ear cress).